The primary structure comprises 195 residues: Dephospho-CoA kinase (195 aa).

A DPCK domain is found at 4–195 (IIGLTGGIAS…EQILDALQRL (192 aa)). 12-17 (ASGKST) contacts ATP.

It belongs to the CoaE family.

It is found in the cytoplasm. The enzyme catalyses 3'-dephospho-CoA + ATP = ADP + CoA + H(+). Its pathway is cofactor biosynthesis; coenzyme A biosynthesis; CoA from (R)-pantothenate: step 5/5. Functionally, catalyzes the phosphorylation of the 3'-hydroxyl group of dephosphocoenzyme A to form coenzyme A. This Streptococcus agalactiae serotype Ia (strain ATCC 27591 / A909 / CDC SS700) protein is Dephospho-CoA kinase.